The chain runs to 140 residues: Translation initiation factor 2 subunit beta (140 aa).

It belongs to the eIF-2-beta/eIF-5 family. Heterotrimer composed of an alpha, a beta and a gamma chain.

Functionally, eIF-2 functions in the early steps of protein synthesis by forming a ternary complex with GTP and initiator tRNA. The polypeptide is Translation initiation factor 2 subunit beta (eif2b) (Pyrococcus abyssi (strain GE5 / Orsay)).